A 548-amino-acid chain; its full sequence is (S)-beta-macrocarpene synthase (548 aa).

Positions 302 and 306 each coordinate Mg(2+). Positions 302, 306, 443, and 446 each coordinate substrate. Positions 302 to 306 match the DDXXD motif motif; it reads DDTLD. The Mg(2+) site is built by N446, S450, and E454.

This sequence belongs to the terpene synthase family. In terms of assembly, monomer. The cofactor is Mg(2+). Mn(2+) serves as cofactor. In terms of tissue distribution, expressed in roots. Not detected in leaves, unless damaged by herbivory or infected by fungi.

The protein resides in the cytoplasm. It carries out the reaction (S)-beta-bisabolene = (S)-beta-macrocarpene. The catalysed reaction is (2E,6E)-farnesyl diphosphate = (S)-beta-bisabolene + diphosphate. The enzyme catalyses (2E)-geranyl diphosphate = (4S)-limonene + diphosphate. It catalyses the reaction (2E)-geranyl diphosphate = beta-myrcene + diphosphate. It carries out the reaction (2E)-geranyl diphosphate = terpinolene + diphosphate. The catalysed reaction is (2E)-geranyl diphosphate + H2O = (S)-linalool + diphosphate. It functions in the pathway secondary metabolite biosynthesis; terpenoid biosynthesis. Involved in the biosynthesis of the bicyclic sesquiterpene (S)-beta-macrocarpene. Can use both geranyl diphosphate and farnesyl diphosphate as substrate, but not geranylgeranyl diphosphate. Produces mainly (S)-beta-macrocarpene, but also smaller amounts of beta-bisabolene and (E)-beta-farnesene when used with farnesyl diphosphate as substrate. In the presence of geranyl diphosphate, produces the acyclic monoterpenes beta-myrcene and linalool along with minor amounts of the cyclic compounds limonene, alpha-thujene, sabinene and alpha-terpinolene. May be involved in plant defense. This is (S)-beta-macrocarpene synthase from Zea mays (Maize).